Reading from the N-terminus, the 342-residue chain is MSALPSQFKLPDLLSTCPLKDGTNPAYKKAAAESRAWIGSYNMFADRKRAFFIQGQNELLCSHVYCYAGYEQLRTTCDFVNLLFVVDEVSDEQSGEDARATGQVFVNAMKYADWHDGSKLAKLTKDFRVRFLRLAGPKNVARFVALCESYTACVGKEAELRESGQVLGVKEFIPLRRQNSAVLLCFSLVEYILGIDLDDEVYRDENFLNAYWAACDHVCWANDVYSYDMEQSKGLSNNNIVTVLMEENHTSLQDTSDYIGEKCAEFVQIYLTSKKRLSPSLGPDAALFLESIGSWMVGNLAWSFETSRYFGSRHLEVKETGIVILRPRELPEDGSSSDSDEE.

Mg(2+)-binding residues include aspartate 87, asparagine 222, serine 226, and glutamate 230. The DDXXD motif motif lies at 87–91 (DEVSD). (2E,6E)-farnesyl diphosphate contacts are provided by arginine 308 and tyrosine 309.

The protein belongs to the terpene synthase family. Mg(2+) is required as a cofactor.

It catalyses the reaction (2E,6E)-farnesyl diphosphate = delta-cadinene + diphosphate. The catalysed reaction is (2E,6E)-farnesyl diphosphate = gamma-muurolene + diphosphate. It carries out the reaction (2E,6E)-farnesyl diphosphate = beta-copaene + diphosphate. The enzyme catalyses (2E)-geranyl diphosphate = beta-myrcene + diphosphate. Functionally, terpene cyclase that catalyzes the cyclization of farnesyl diphosphate (FPP) to various sesquiterpenes, including beta-copaene, alpha-cubebene, cadina-1(6),4-diene, gamma-muurolene, delta-cadinene, epizonarene, epicubenol and cubenol. Agr4 is also able to use the monoterpene precursor geranyl diphosphate (GPP) as substrates to synthesize the monoterpene beta-myrcene. Delta-cadinene is the major product of Agr4. This Cyclocybe aegerita (Black poplar mushroom) protein is Bifunctional terpene synthase Agr4.